Here is a 145-residue protein sequence, read N- to C-terminus: MPKNKGKGGKNRKRGKNEADDDKRELVFKEDGQEYAQVLRMLGNGRCEAMCIDGTKRLCHIRGKMHKKVWIAAGDIILVGLRDYQDDKADVILKLMPDEARLLKAYGELPDNTRLNEGIGAGGLDEEMDTANDYIEFEDEDIDKI.

Over residues 1-15 (MPKNKGKGGKNRKRG) the composition is skewed to basic residues. A disordered region spans residues 1–25 (MPKNKGKGGKNRKRGKNEADDDKRE). Residues 16–25 (KNEADDDKRE) show a composition bias toward basic and acidic residues. The 75-residue stretch at 22–96 (DKRELVFKED…DKADVILKLM (75 aa)) folds into the S1-like domain.

The protein belongs to the eIF-1A family.

Its function is as follows. Seems to be required for maximal rate of protein biosynthesis. Enhances ribosome dissociation into subunits and stabilizes the binding of the initiator Met-tRNA(I) to 40 S ribosomal subunits. The protein is Eukaryotic translation initiation factor 1A of Onobrychis viciifolia (Common sainfoin).